Here is a 364-residue protein sequence, read N- to C-terminus: Heme A synthase (364 aa).

8 helical membrane passes run 25 to 45 (ALRL…LVGG), 111 to 131 (FLAR…WATG), 139 to 159 (WPLV…WWMV), 174 to 194 (LATH…VMRG), 212 to 232 (AIAL…VAGL), 270 to 290 (VQFV…YHMV), 305 to 325 (SVVL…ALLL), and 327 to 347 (VPLD…GFTV). A heme-binding site is contributed by His274. His335 provides a ligand contact to heme.

It belongs to the COX15/CtaA family. Type 2 subfamily. In terms of assembly, interacts with CtaB. Heme b serves as cofactor.

Its subcellular location is the cell membrane. The catalysed reaction is Fe(II)-heme o + 2 A + H2O = Fe(II)-heme a + 2 AH2. Its pathway is porphyrin-containing compound metabolism; heme A biosynthesis; heme A from heme O: step 1/1. In terms of biological role, catalyzes the conversion of heme O to heme A by two successive hydroxylations of the methyl group at C8. The first hydroxylation forms heme I, the second hydroxylation results in an unstable dihydroxymethyl group, which spontaneously dehydrates, resulting in the formyl group of heme A. This Allorhizobium ampelinum (strain ATCC BAA-846 / DSM 112012 / S4) (Agrobacterium vitis (strain S4)) protein is Heme A synthase.